Here is a 363-residue protein sequence, read N- to C-terminus: Phosphoserine aminotransferase (363 aa).

L-glutamate contacts are provided by Ser-9 and Arg-42. Residues 76-77 (AR), Trp-102, Thr-154, Asp-174, and Gln-197 contribute to the pyridoxal 5'-phosphate site. The residue at position 198 (Lys-198) is an N6-(pyridoxal phosphate)lysine. 240–241 (NT) contributes to the pyridoxal 5'-phosphate binding site.

It belongs to the class-V pyridoxal-phosphate-dependent aminotransferase family. SerC subfamily. As to quaternary structure, homodimer. Requires pyridoxal 5'-phosphate as cofactor.

The protein localises to the cytoplasm. It catalyses the reaction O-phospho-L-serine + 2-oxoglutarate = 3-phosphooxypyruvate + L-glutamate. It carries out the reaction 4-(phosphooxy)-L-threonine + 2-oxoglutarate = (R)-3-hydroxy-2-oxo-4-phosphooxybutanoate + L-glutamate. It participates in amino-acid biosynthesis; L-serine biosynthesis; L-serine from 3-phospho-D-glycerate: step 2/3. It functions in the pathway cofactor biosynthesis; pyridoxine 5'-phosphate biosynthesis; pyridoxine 5'-phosphate from D-erythrose 4-phosphate: step 3/5. Its function is as follows. Catalyzes the reversible conversion of 3-phosphohydroxypyruvate to phosphoserine and of 3-hydroxy-2-oxo-4-phosphonooxybutanoate to phosphohydroxythreonine. This chain is Phosphoserine aminotransferase, found in Baumannia cicadellinicola subsp. Homalodisca coagulata.